The chain runs to 419 residues: Elongation factor Tu, chloroplastic (419 aa).

Positions 10-214 (KPHVNIGTIG…TVDEHIPTPK (205 aa)) constitute a tr-type G domain. Positions 19 to 26 (GHVDHGKT) are G1. 19 to 26 (GHVDHGKT) provides a ligand contact to GTP. Residue Thr26 coordinates Mg(2+). Positions 60-64 (GITIN) are G2. Residues 81 to 84 (DCPG) form a G3 region. Residues 81–85 (DCPGH) and 136–139 (NKAD) contribute to the GTP site. A G4 region spans residues 136–139 (NKAD). The segment at 174-176 (SAL) is G5.

It belongs to the TRAFAC class translation factor GTPase superfamily. Classic translation factor GTPase family. EF-Tu/EF-1A subfamily.

Its subcellular location is the plastid. The protein resides in the chloroplast. It catalyses the reaction GTP + H2O = GDP + phosphate + H(+). GTP hydrolase that promotes the GTP-dependent binding of aminoacyl-tRNA to the A-site of ribosomes during protein biosynthesis. This is Elongation factor Tu, chloroplastic (tufA) from Stigeoclonium helveticum (Green alga).